The sequence spans 195 residues: Transcriptional regulator GfcR (195 aa).

This sequence belongs to the purine/pyrimidine phosphoribosyltransferase family. GfcR subfamily.

The protein is Transcriptional regulator GfcR of Archaeoglobus fulgidus (strain ATCC 49558 / DSM 4304 / JCM 9628 / NBRC 100126 / VC-16).